A 109-amino-acid chain; its full sequence is MAPEVIRQDFQAGEVAFRRTGYLRGRSVLTQTKHSLAGNGRHPVALRTRLGSLALGAVPTWTKLWAQSTTWQTRNHTRTGHAYPRFTRPSFPSCNRNGKRRKLRLGLPY.

Residues 77–98 (TRTGHAYPRFTRPSFPSCNRNG) are disordered.

This is an uncharacterized protein from Homo sapiens (Human).